The sequence spans 347 residues: NADH-ubiquinone oxidoreductase chain 2 (347 aa).

11 helical membrane passes run 3-23, 25-45, 59-79, 96-116, 122-142, 149-169, 178-198, 200-220, 237-257, 274-294, and 325-345; these read PPIL…VLTS, HWLT…PILM, YLLT…IDLL, AMMT…FWVP, IHMS…LSIL, INPN…GWGG, ILAY…LYNP, MMIL…MLFM, APLI…LPPL, EMII…YFYM, and LLSP…LLSI.

Belongs to the complex I subunit 2 family. As to quaternary structure, core subunit of respiratory chain NADH dehydrogenase (Complex I) which is composed of 45 different subunits. Interacts with TMEM242.

The protein resides in the mitochondrion inner membrane. The catalysed reaction is a ubiquinone + NADH + 5 H(+)(in) = a ubiquinol + NAD(+) + 4 H(+)(out). Functionally, core subunit of the mitochondrial membrane respiratory chain NADH dehydrogenase (Complex I) which catalyzes electron transfer from NADH through the respiratory chain, using ubiquinone as an electron acceptor. Essential for the catalytic activity and assembly of complex I. The chain is NADH-ubiquinone oxidoreductase chain 2 from Cynictis penicillata (Yellow mongoose).